The following is a 147-amino-acid chain: Hemoglobin subunit beta (147 aa).

A Globin domain is found at 3-147; that stretch reads NWTKTEKATI…VMSALGKQYH (145 aa). Heme b-binding residues include H64 and H93.

It belongs to the globin family. Heterotetramer of two alpha chains and two beta chains. Red blood cells.

In terms of biological role, involved in oxygen transport from gills to the various peripheral tissues. The polypeptide is Hemoglobin subunit beta (hbb) (Gymnodraco acuticeps (Antarctic dragonfish)).